A 247-amino-acid chain; its full sequence is tRNA pseudouridine synthase A (247 aa).

Residue D52 is the Nucleophile of the active site. Y113 provides a ligand contact to substrate.

Belongs to the tRNA pseudouridine synthase TruA family. As to quaternary structure, homodimer.

It carries out the reaction uridine(38/39/40) in tRNA = pseudouridine(38/39/40) in tRNA. Formation of pseudouridine at positions 38, 39 and 40 in the anticodon stem and loop of transfer RNAs. This chain is tRNA pseudouridine synthase A, found in Bartonella tribocorum (strain CIP 105476 / IBS 506).